The following is a 524-amino-acid chain: Tubulin-specific chaperone E (524 aa).

N-acetylserine is present on Ser2. The 45-residue stretch at 27 to 71 (GAVPPVAGLWLGVEWDNPERGKHDGSHEGTMYFKCRHPTGGSFVR) folds into the CAP-Gly domain. LRR repeat units lie at residues 154-175 (NIRV…ILIA), 180-201 (DLEA…PTLT), 206-227 (TLKT…HCAP), 231-253 (VLQE…NALQ), 254-273 (NLRL…QLCL), 279-300 (RLEH…DAEI), and 309-330 (ALTY…NELD). The LRRCT domain occupies 343-381 (NPLTKGDKAEEIIIAKIGQLKTLNRCQILPEERRGAELD). Lys460 is modified (N6-acetyllysine). Ser492 bears the Phosphoserine mark.

It belongs to the TBCE family. In terms of assembly, supercomplex made of cofactors A to E. Cofactors A and D function by capturing and stabilizing tubulin in a quasi-native conformation. Cofactor E binds to the cofactor D-tubulin complex; interaction with cofactor C then causes the release of tubulin polypeptides that are committed to the native state. Cofactors B and E can form a heterodimer which binds to alpha-tubulin and enhances their ability to dissociate tubulin heterodimers. Interacts with TBCD.

It localises to the cytoplasm. The protein resides in the cytoskeleton. Tubulin-folding protein; involved in the second step of the tubulin folding pathway and in the regulation of tubulin heterodimer dissociation. Required for correct organization of microtubule cytoskeleton and mitotic splindle, and maintenance of the neuronal microtubule network. This Rattus norvegicus (Rat) protein is Tubulin-specific chaperone E (Tbce).